Reading from the N-terminus, the 504-residue chain is uncharacterized protein (504 aa).

This sequence to M.thermoautotrophicum MTH1137.

This is an uncharacterized protein from Methanocaldococcus jannaschii (strain ATCC 43067 / DSM 2661 / JAL-1 / JCM 10045 / NBRC 100440) (Methanococcus jannaschii).